We begin with the raw amino-acid sequence, 521 residues long: Ribonuclease Y (521 aa).

The helical transmembrane segment at 5–25 (MMTMILAVIAAAIGFLIGNLL) threads the bilayer. The KH domain occupies 211 to 271 (TVSVVALPSD…VRREVAKLSL (61 aa)). In terms of domain architecture, HD spans 337–430 (VYQHSLEVAF…VQAADALSGA (94 aa)).

The protein belongs to the RNase Y family.

It is found in the cell membrane. Endoribonuclease that initiates mRNA decay. The protein is Ribonuclease Y of Geotalea uraniireducens (strain Rf4) (Geobacter uraniireducens).